We begin with the raw amino-acid sequence, 308 residues long: Cytochrome b (308 aa).

A run of 4 helical transmembrane segments spans residues 1–21 (FGSL…LLAT), 45–66 (WLIR…YIHI), 81–101 (WNVG…GYVL), and 146–166 (FFAL…VHLT). Heme b-binding residues include His-51 and His-65. Heme b contacts are provided by His-150 and His-164. His-169 lines the a ubiquinone pocket. A run of 3 helical transmembrane segments spans residues 194-214 (MKDI…ALFS), 256-276 (LGGV…PLLH), and 288-308 (LSQI…WVGS).

The protein belongs to the cytochrome b family. As to quaternary structure, the cytochrome bc1 complex contains 11 subunits: 3 respiratory subunits (MT-CYB, CYC1 and UQCRFS1), 2 core proteins (UQCRC1 and UQCRC2) and 6 low-molecular weight proteins (UQCRH/QCR6, UQCRB/QCR7, UQCRQ/QCR8, UQCR10/QCR9, UQCR11/QCR10 and a cleavage product of UQCRFS1). This cytochrome bc1 complex then forms a dimer. Heme b is required as a cofactor.

The protein resides in the mitochondrion inner membrane. Component of the ubiquinol-cytochrome c reductase complex (complex III or cytochrome b-c1 complex) that is part of the mitochondrial respiratory chain. The b-c1 complex mediates electron transfer from ubiquinol to cytochrome c. Contributes to the generation of a proton gradient across the mitochondrial membrane that is then used for ATP synthesis. This is Cytochrome b (MT-CYB) from Ptiloprora plumbea (Leaden honeyeater).